The primary structure comprises 485 residues: Glutamyl-tRNA(Gln) amidotransferase subunit A (485 aa).

Catalysis depends on charge relay system residues K78 and S153. Catalysis depends on S177, which acts as the Acyl-ester intermediate.

The protein belongs to the amidase family. GatA subfamily. In terms of assembly, heterotrimer of A, B and C subunits.

It carries out the reaction L-glutamyl-tRNA(Gln) + L-glutamine + ATP + H2O = L-glutaminyl-tRNA(Gln) + L-glutamate + ADP + phosphate + H(+). Functionally, allows the formation of correctly charged Gln-tRNA(Gln) through the transamidation of misacylated Glu-tRNA(Gln) in organisms which lack glutaminyl-tRNA synthetase. The reaction takes place in the presence of glutamine and ATP through an activated gamma-phospho-Glu-tRNA(Gln). This chain is Glutamyl-tRNA(Gln) amidotransferase subunit A, found in Geotalea daltonii (strain DSM 22248 / JCM 15807 / FRC-32) (Geobacter daltonii).